An 896-amino-acid chain; its full sequence is Serine/threonine-protein kinase TAO3 (896 aa).

Residues 24-277 form the Protein kinase domain; that stretch reads FVDLHEIGHG…SLELLRHDFV (254 aa). ATP contacts are provided by residues 30-38 and Lys53; that span reads IGHGSFGAV. The active-site Proton acceptor is the Asp147. 2 disordered regions span residues 316-366 and 403-423; these read SRNG…SVNS and DEAD…VQSQ. The segment covering 334-348 has biased composition (polar residues); the sequence is GTSLTRKMDSLGSNH. Low complexity predominate over residues 349 to 366; it reads SIPSTSVSTGSQSSSVNS. Basic and acidic residues predominate over residues 403–414; the sequence is DEADHRDPRPEL. Coiled-coil stretches lie at residues 450-513, 545-650, and 752-873; these read EQEN…SKRQ, SFLE…LIRQ, and LKSL…IETF. Positions 565–587 are enriched in basic and acidic residues; that stretch reads LNEDHSTPKKEKQERISKHKENL. The segment at 565–593 is disordered; the sequence is LNEDHSTPKKEKQERISKHKENLQHTQAE.

It belongs to the protein kinase superfamily. STE Ser/Thr protein kinase family. STE20 subfamily.

The protein resides in the cytoplasm. Its subcellular location is the cell membrane. It is found in the membrane raft. The protein localises to the lipid droplet. The catalysed reaction is L-seryl-[protein] + ATP = O-phospho-L-seryl-[protein] + ADP + H(+). The enzyme catalyses L-threonyl-[protein] + ATP = O-phospho-L-threonyl-[protein] + ADP + H(+). In terms of biological role, serine/threonine-protein kinase that acts as a regulator of the p38/MAPK14 stress-activated MAPK cascade and of the MAPK8/JNK cascade. In response to DNA damage, involved in the G2/M transition DNA damage checkpoint by activating the p38/MAPK14 stress-activated MAPK cascade, probably by mediating phosphorylation of upstream MAP kinase kinases. Inhibits basal activity of the MAPK8/JNK cascade. This is Serine/threonine-protein kinase TAO3 (taok3) from Xenopus laevis (African clawed frog).